Consider the following 425-residue polypeptide: Glutamyl-tRNA reductase (425 aa).

Substrate is bound by residues 49–52 (TCNR), serine 107, 112–114 (EPQ), and glutamine 118. Catalysis depends on cysteine 50, which acts as the Nucleophile. 187 to 192 (GAGETI) lines the NADP(+) pocket.

It belongs to the glutamyl-tRNA reductase family. In terms of assembly, homodimer.

The enzyme catalyses (S)-4-amino-5-oxopentanoate + tRNA(Glu) + NADP(+) = L-glutamyl-tRNA(Glu) + NADPH + H(+). It participates in porphyrin-containing compound metabolism; protoporphyrin-IX biosynthesis; 5-aminolevulinate from L-glutamyl-tRNA(Glu): step 1/2. Catalyzes the NADPH-dependent reduction of glutamyl-tRNA(Glu) to glutamate 1-semialdehyde (GSA). The polypeptide is Glutamyl-tRNA reductase (Pseudomonas putida (strain GB-1)).